Here is a 252-residue protein sequence, read N- to C-terminus: 5'-nucleotidase SurE (252 aa).

A divalent metal cation contacts are provided by aspartate 8, aspartate 9, serine 39, and asparagine 91.

It belongs to the SurE nucleotidase family. Requires a divalent metal cation as cofactor.

Its subcellular location is the cytoplasm. The enzyme catalyses a ribonucleoside 5'-phosphate + H2O = a ribonucleoside + phosphate. Nucleotidase that shows phosphatase activity on nucleoside 5'-monophosphates. The chain is 5'-nucleotidase SurE from Legionella pneumophila (strain Paris).